The following is a 423-amino-acid chain: Serpin B12 (423 aa).

Residues 63-72 (LSKDEHKEPN) show a composition bias toward basic and acidic residues. The segment at 63–106 (LSKDEHKEPNDPSPQSESKASDSSLEGQKQTSASQDQQGESTND) is disordered. Positions 75–106 (SPQSESKASDSSLEGQKQTSASQDQQGESTND) are enriched in polar residues.

It belongs to the serpin family. Ov-serpin subfamily. In terms of assembly, interacts with SLFN12; as part of a pathway regulating cell differentiation.

The protein localises to the cytoplasm. In terms of biological role, inhibits trypsin and plasmin, but not thrombin, coagulation factor Xa, or urokinase-type plasminogen activator. May play a role in cell differentiation. The sequence is that of Serpin B12 (Serpinb12) from Mus musculus (Mouse).